The chain runs to 154 residues: Transcriptional repressor NrdR (154 aa).

A zinc finger spans residues 3 to 34 (CPFCGNENTRVIDTRAAEDGFAIKRRRECENC). Residues 49–139 (LIVVKKDGSK…VYRQFKDVNS (91 aa)) form the ATP-cone domain.

Belongs to the NrdR family. It depends on Zn(2+) as a cofactor.

Functionally, negatively regulates transcription of bacterial ribonucleotide reductase nrd genes and operons by binding to NrdR-boxes. This Carboxydothermus hydrogenoformans (strain ATCC BAA-161 / DSM 6008 / Z-2901) protein is Transcriptional repressor NrdR.